Consider the following 611-residue polypeptide: Guanylate-binding protein 6 (611 aa).

The interval 1-308 (MTQPQMAPIC…NAINSGAVPC (308 aa)) is GTPase domain (Globular). The 243-residue stretch at 33–275 (SQPVVVVAIV…FVSYIFTYAK (243 aa)) folds into the GB1/RHD3-type G domain. GTP is bound by residues 43 to 50 (GLYRTGKS), 65 to 67 (LGS), and 95 to 99 (DTEGL).

It belongs to the TRAFAC class dynamin-like GTPase superfamily. GB1/RHD3 GTPase family. GB1 subfamily.

The protein localises to the cytoplasmic vesicle. It carries out the reaction GTP + H2O = GDP + phosphate + H(+). In terms of biological role, interferon (IFN)-inducible GTPase that plays important roles in innate immunity against a diverse range of bacterial, viral and protozoan pathogens, such as bacterial pathogens Listeria monocytogenes and Mycobacterium bovis BCG as well as the protozoan pathogen Toxoplasma gondii. Confers protection to several pathogens, including the bacterial pathogens Listeria monocytogenes and Mycobacterium bovis BCG as well as the protozoan pathogen Toxoplasma gondii. This Mus musculus (Mouse) protein is Guanylate-binding protein 6 (Gbp6).